Consider the following 286-residue polypeptide: ATP synthase gamma chain (286 aa).

This sequence belongs to the ATPase gamma chain family. As to quaternary structure, F-type ATPases have 2 components, CF(1) - the catalytic core - and CF(0) - the membrane proton channel. CF(1) has five subunits: alpha(3), beta(3), gamma(1), delta(1), epsilon(1). CF(0) has three main subunits: a, b and c.

It is found in the cell inner membrane. In terms of biological role, produces ATP from ADP in the presence of a proton gradient across the membrane. The gamma chain is believed to be important in regulating ATPase activity and the flow of protons through the CF(0) complex. This chain is ATP synthase gamma chain, found in Pseudomonas fluorescens (strain ATCC BAA-477 / NRRL B-23932 / Pf-5).